A 127-amino-acid chain; its full sequence is Large ribosomal subunit protein bL17 (127 aa).

Belongs to the bacterial ribosomal protein bL17 family. Part of the 50S ribosomal subunit. Contacts protein L32.

The sequence is that of Large ribosomal subunit protein bL17 from Xanthomonas oryzae pv. oryzae (strain KACC10331 / KXO85).